A 77-amino-acid polypeptide reads, in one-letter code: Phytosulfokines 5 (77 aa).

An N-terminal signal peptide occupies residues 1–24 (MVKFTTFLCIIALLLCSTLTHASA). A propeptide spanning residues 25–68 (RLNPTSVYPEENSFKKLEQGEVICEGVGEEECFLIRRTLVAHTD) is cleaved from the precursor. Tyr-69 and Tyr-71 each carry sulfotyrosine. Positions 74–77 (NHNP) are excised as a propeptide.

This sequence belongs to the phytosulfokine family. In terms of processing, sulfation is important for activity and for the binding to a putative membrane receptor. Post-translationally, PSK-beta is an enzymatic derivative of PSK-alpha. Expressed in stems, roots, mature leaves and flowers. Most abundant in vascular bundles.

The protein localises to the secreted. Functionally, promotes plant cell differentiation, organogenesis and somatic embryogenesis as well as cell proliferation. May be involved in the low quiescent center cell proliferation. This is Phytosulfokines 5 (PSK5) from Arabidopsis thaliana (Mouse-ear cress).